Consider the following 193-residue polypeptide: Capsid protein (193 aa).

The N-terminus is blocked.

The protein resides in the virion. The protein is Capsid protein of Crataegus (hawthorn).